The following is a 483-amino-acid chain: Zinc metalloproteinase/disintegrin VMP-II (483 aa).

The first 20 residues, 1 to 20 (MIQVLLVTLCLAAFPYQGNS), serve as a signal peptide directing secretion. A propeptide spanning residues 21–191 (IILESGNVND…KASQLNLTPE (171 aa)) is cleaved from the precursor. The region spanning 198-394 (RYIELVVVAD…HNPQCMLNEP (197 aa)) is the Peptidase M12B domain. Residues Glu201 and Asp285 each contribute to the Ca(2+) site. Disulfide bonds link Cys309–Cys389, Cys349–Cys373, and Cys351–Cys356. His334 contacts Zn(2+). Glu335 is an active-site residue. The Zn(2+) site is built by His338 and His344. The Ca(2+) site is built by Cys389 and Asn392. Positions 395–414 (LRTDIVSTPVSGNELWETGE) are excised as a propeptide. In terms of domain architecture, Disintegrin spans 402–483 (TPVSGNELWE…AGCPRNPFHA (82 aa)). 4 disulfides stabilise this stretch: Cys425-Cys448, Cys439-Cys445, Cys444-Cys469, and Cys457-Cys476. The Cell attachment site; atypical (KGD) signature appears at 461–463 (KGD).

Belongs to the venom metalloproteinase (M12B) family. P-II subfamily. P-IIe sub-subfamily. In terms of assembly, heterodimer; disulfide-linked (disintegrin). Zn(2+) serves as cofactor. As to expression, expressed by the venom gland.

It localises to the secreted. With respect to regulation, inhibited by EDTA and 1,10-phenanthroline, but not by PMSF. Functionally, has fibrinolytic activity. The recombinant enzyme cleaves both alpha- (FGA) and beta-chains (FGB) of fibrinogen, but not the gamma-chain. The recombinant protein does not produce hemorrhage in mice and does not have effect on ADP- or collagen-stimulated platelet aggregation. Its function is as follows. Inhibits platelet aggregation induced by ADP, thrombin, platelet-activating factor and collagen. Acts by inhibiting fibrinogen interaction with platelet receptors GPIIb/GPIIIa (ITGA2B/ITGB3). This Agkistrodon piscivorus leucostoma (Western cottonmouth) protein is Zinc metalloproteinase/disintegrin VMP-II.